We begin with the raw amino-acid sequence, 335 residues long: Cytochrome c biogenesis protein CcsA (335 aa).

8 helical membrane passes run 15–35, 36–56, 68–88, 97–117, 142–162, 243–263, 278–298, and 304–324; these read FLLL…PNVT, WLPT…ATLL, LSNL…IHLV, LVGV…ALSL, VMML…AFLV, IIGL…VWAN, WALI…TKGW, and AILA…VNLL.

Belongs to the CcmF/CycK/Ccl1/NrfE/CcsA family. As to quaternary structure, may interact with ccs1.

Its subcellular location is the cellular thylakoid membrane. Required during biogenesis of c-type cytochromes (cytochrome c6 and cytochrome f) at the step of heme attachment. The chain is Cytochrome c biogenesis protein CcsA from Crocosphaera subtropica (strain ATCC 51142 / BH68) (Cyanothece sp. (strain ATCC 51142)).